The chain runs to 286 residues: Protein N-terminal amidase (286 aa).

The CN hydrolase domain occupies 1-286 (MKFGCVQFFP…NGIVVGELEK (286 aa)). The Proton acceptor role is filled by Glu43. Lys121 functions as the Proton donor in the catalytic mechanism. The active-site Nucleophile is Cys155.

The protein belongs to the carbon-nitrogen hydrolase superfamily.

The protein localises to the cytoplasm. It is found in the nucleus. Deamidates N-terminal Asn and Gln. Component of a targeting complex in the N-end rule pathway. The polypeptide is Protein N-terminal amidase (nta1) (Schizosaccharomyces pombe (strain 972 / ATCC 24843) (Fission yeast)).